The chain runs to 471 residues: MANTQAAVGKIVQCIGAVVDVEFPRDQMPRVYDALKMEGSALTLEVQQQLGDGVVRTIALGSSDGLRRGLMVSNTGAAITVPVGKATLGRIMDVLGSPIDERGPVSAELSMPIHRKAPAYDELSPSQELLETGIKVIDLICPFAKGGKVGLFGGAGVGKTVNMMELINNIAKAHSGLSVFAGVGERTREGNDFYHEMSDSKVVVQEDLTQSKVAMVYGQMNEPPGNRLRVALTGLTIAESFRDEGRDVLFFVDNIYRYTLAGTEVSALLGRMPSAVGYQPTLAEEMGRLQERITSTKVGSITSIQAVYVPADDLTDPSPATTFAHLDATVVLSRDIASLGIYPAVDPLDSTSRQIDPNVVGEEHYNTTRAVQQVLQRYKELRDIIAILGMDELAPEDKLAVARARKIQRFLSQPFHVAEVFTGSPGKYVPLKETIRGFKMIVAGECDSLPEQAFYMVGTIDEAFEKAKKIQ.

Residue 153–160 coordinates ATP; it reads GGAGVGKT.

The protein belongs to the ATPase alpha/beta chains family. In terms of assembly, F-type ATPases have 2 components, CF(1) - the catalytic core - and CF(0) - the membrane proton channel. CF(1) has five subunits: alpha(3), beta(3), gamma(1), delta(1), epsilon(1). CF(0) has four main subunits: a(1), b(1), b'(1) and c(9-12).

Its subcellular location is the cell inner membrane. The catalysed reaction is ATP + H2O + 4 H(+)(in) = ADP + phosphate + 5 H(+)(out). Its function is as follows. Produces ATP from ADP in the presence of a proton gradient across the membrane. The catalytic sites are hosted primarily by the beta subunits. This Methylibium petroleiphilum (strain ATCC BAA-1232 / LMG 22953 / PM1) protein is ATP synthase subunit beta.